Here is a 450-residue protein sequence, read N- to C-terminus: Bifunctional apoptosis regulator (450 aa).

Over residues 1 to 20 (MEEPQKNDLSMREQEEEHPV) the composition is skewed to basic and acidic residues. A disordered region spans residues 1 to 25 (MEEPQKNDLSMREQEEEHPVRSSGP). Residues 1–140 (MEEPQKNDLS…PSTGRVNPQR (140 aa)) are Cytoplasmic-facing. The RING-type zinc-finger motif lies at 34-74 (CHCCYDTLVNPTTLNCGHSFCRHCLALWWMSSKKTECPECR). A helical membrane pass occupies residues 141 to 161 (GGGFFSGVLTALTGVAVILLV). Topologically, residues 162–331 (YHWRSRESEH…REPTWKQWRE (170 aa)) are extracellular. Residues 182 to 249 (WTMEEVVLWL…LTELERVRAL (68 aa)) enclose the SAM domain. Residues N232 and N308 are each glycosylated (N-linked (GlcNAc...) asparagine). Residues 332 to 352 (FLVKYSFLPYQLIAEFAWDWL) traverse the membrane as a helical segment. The Cytoplasmic portion of the chain corresponds to 353-360 (EVHYWTSR). A helical membrane pass occupies residues 361–381 (FLIVNAVLLSVLELFSFWRIW). Residues 382–404 (SRSELKTVPQRMWSHFWKVSTQG) lie on the Extracellular side of the membrane. Residues 405-425 (LFMAMFWPLIPQFVCNCLFYW) form a helical membrane-spanning segment. Over 426–450 (ALYFNPIINIDLVVKEVRRLETQVL) the chain is Cytoplasmic.

In terms of assembly, interacts with CASP8, BCL2 and BCL2L1 through SAM domain and also with HIP1, IFT57, ESRRBL1 and BCAP31. Interacts with NGFR; this interaction inhibits NF-kappa-B and JNK-related signaling pathways. Mediates RING-dependent self-ubiquitination leading to proteasomal degradation.

The protein resides in the endoplasmic reticulum membrane. The catalysed reaction is S-ubiquitinyl-[E2 ubiquitin-conjugating enzyme]-L-cysteine + [acceptor protein]-L-lysine = [E2 ubiquitin-conjugating enzyme]-L-cysteine + N(6)-ubiquitinyl-[acceptor protein]-L-lysine.. Functionally, membrane-bound E3 ubiquitin ligase that plays a role in several processes including apoptosis regulation or reticulum endoplasmic stress. Has anti-apoptotic activity, both for apoptosis triggered via death-receptors and via mitochondrial factors. Contributes to the dynamic control of IRE1/ERN1 signaling during ER stress by inducing BAX inhibitor 1/TMBIM6 proteasomal degradation. Promotes the activation of TGF-beta signaling by mediating the 'Lys-63'-linked ubiquitination of TGFBR1 which is critical to activate the pathway. Together with NGFR, negatively regulates NF-kappa-B and JNK-related signaling pathways. Promotes the proteasome-mediated degradation of PNPLA3, a protein involveld in lipid metabolism. In Mus musculus (Mouse), this protein is Bifunctional apoptosis regulator (Bfar).